Here is a 199-residue protein sequence, read N- to C-terminus: MQYPEPISKLIDSYMRLPGIGAKTATRLAFYTIDMNKDDVTAFAKSLVAAKEDLHYCSICGNITDEDPCAICRDKSRDQSTILVVEQPKDVMSIDRAQDYHGLYHVLHGVLSPIEGRGPEDLNIESLLKRLKANKAVKEVIIATNATPEGEATAQYLARLIKPAGIKVTRLAHGLSVGSDIEYADEMTLMKAVEGRTEL.

The segment at 57–72 adopts a C4-type zinc-finger fold; it reads CSICGNITDEDPCAIC. One can recognise a Toprim domain in the interval 80–176; the sequence is STILVVEQPK…KVTRLAHGLS (97 aa).

This sequence belongs to the RecR family.

May play a role in DNA repair. It seems to be involved in an RecBC-independent recombinational process of DNA repair. It may act with RecF and RecO. The sequence is that of Recombination protein RecR from Lacticaseibacillus casei (strain BL23) (Lactobacillus casei).